A 288-amino-acid chain; its full sequence is Acetyl-coenzyme A carboxylase carboxyl transferase subunit beta (288 aa).

Residues 30-288 (IMTKCPKCKK…KMHQEVKTNA (259 aa)) form the CoA carboxyltransferase N-terminal domain. Positions 34, 37, 53, and 56 each coordinate Zn(2+). The C4-type zinc-finger motif lies at 34–56 (CPKCKKIMYTKELAENLNVCFNC).

Belongs to the AccD/PCCB family. In terms of assembly, acetyl-CoA carboxylase is a heterohexamer composed of biotin carboxyl carrier protein (AccB), biotin carboxylase (AccC) and two subunits each of ACCase subunit alpha (AccA) and ACCase subunit beta (AccD). Zn(2+) serves as cofactor.

Its subcellular location is the cytoplasm. The catalysed reaction is N(6)-carboxybiotinyl-L-lysyl-[protein] + acetyl-CoA = N(6)-biotinyl-L-lysyl-[protein] + malonyl-CoA. It functions in the pathway lipid metabolism; malonyl-CoA biosynthesis; malonyl-CoA from acetyl-CoA: step 1/1. In terms of biological role, component of the acetyl coenzyme A carboxylase (ACC) complex. Biotin carboxylase (BC) catalyzes the carboxylation of biotin on its carrier protein (BCCP) and then the CO(2) group is transferred by the transcarboxylase to acetyl-CoA to form malonyl-CoA. The chain is Acetyl-coenzyme A carboxylase carboxyl transferase subunit beta from Staphylococcus saprophyticus subsp. saprophyticus (strain ATCC 15305 / DSM 20229 / NCIMB 8711 / NCTC 7292 / S-41).